A 526-amino-acid chain; its full sequence is Putative UDP-glucuronosyltransferase ugt-48 (526 aa).

Residues 1 to 17 (MLLRILTFLAVCQVTTS) form the signal peptide. N58 and N305 each carry an N-linked (GlcNAc...) asparagine glycan. The helical transmembrane segment at 489-509 (FYNLDIIITAASIPVLIFIVL) threads the bilayer. N-linked (GlcNAc...) asparagine glycosylation occurs at N513.

This sequence belongs to the UDP-glycosyltransferase family. In terms of assembly, interacts with cmd-1 in the presence of Ca(2+).

It localises to the membrane. The catalysed reaction is glucuronate acceptor + UDP-alpha-D-glucuronate = acceptor beta-D-glucuronoside + UDP + H(+). The chain is Putative UDP-glucuronosyltransferase ugt-48 (ugt-48) from Caenorhabditis elegans.